Reading from the N-terminus, the 101-residue chain is ATP synthase subunit c (101 aa).

Helical transmembrane passes span 28–48 (SVVA…VGMG) and 72–92 (MFIA…IALI).

Belongs to the ATPase C chain family. In terms of assembly, F-type ATPases have 2 components, F(1) - the catalytic core - and F(0) - the membrane proton channel. F(1) has five subunits: alpha(3), beta(3), gamma(1), delta(1), epsilon(1). F(0) has three main subunits: a(1), b(2) and c(10-14). The alpha and beta chains form an alternating ring which encloses part of the gamma chain. F(1) is attached to F(0) by a central stalk formed by the gamma and epsilon chains, while a peripheral stalk is formed by the delta and b chains.

It localises to the cell inner membrane. In terms of biological role, f(1)F(0) ATP synthase produces ATP from ADP in the presence of a proton or sodium gradient. F-type ATPases consist of two structural domains, F(1) containing the extramembraneous catalytic core and F(0) containing the membrane proton channel, linked together by a central stalk and a peripheral stalk. During catalysis, ATP synthesis in the catalytic domain of F(1) is coupled via a rotary mechanism of the central stalk subunits to proton translocation. Its function is as follows. Key component of the F(0) channel; it plays a direct role in translocation across the membrane. A homomeric c-ring of between 10-14 subunits forms the central stalk rotor element with the F(1) delta and epsilon subunits. The protein is ATP synthase subunit c of Sulfurovum sp. (strain NBC37-1).